Here is a 619-residue protein sequence, read N- to C-terminus: Dihydroxy-acid dehydratase (619 aa).

A Mg(2+)-binding site is contributed by Asp81. [2Fe-2S] cluster is bound at residue Cys122. The Mg(2+) site is built by Asp123 and Lys124. At Lys124 the chain carries N6-carboxylysine. [2Fe-2S] cluster is bound at residue Cys198. A Mg(2+)-binding site is contributed by Glu494. Ser520 functions as the Proton acceptor in the catalytic mechanism.

It belongs to the IlvD/Edd family. Homodimer. Requires [2Fe-2S] cluster as cofactor. Mg(2+) serves as cofactor.

The catalysed reaction is (2R)-2,3-dihydroxy-3-methylbutanoate = 3-methyl-2-oxobutanoate + H2O. It catalyses the reaction (2R,3R)-2,3-dihydroxy-3-methylpentanoate = (S)-3-methyl-2-oxopentanoate + H2O. It functions in the pathway amino-acid biosynthesis; L-isoleucine biosynthesis; L-isoleucine from 2-oxobutanoate: step 3/4. The protein operates within amino-acid biosynthesis; L-valine biosynthesis; L-valine from pyruvate: step 3/4. Functionally, functions in the biosynthesis of branched-chain amino acids. Catalyzes the dehydration of (2R,3R)-2,3-dihydroxy-3-methylpentanoate (2,3-dihydroxy-3-methylvalerate) into 2-oxo-3-methylpentanoate (2-oxo-3-methylvalerate) and of (2R)-2,3-dihydroxy-3-methylbutanoate (2,3-dihydroxyisovalerate) into 2-oxo-3-methylbutanoate (2-oxoisovalerate), the penultimate precursor to L-isoleucine and L-valine, respectively. The protein is Dihydroxy-acid dehydratase of Neisseria meningitidis serogroup C / serotype 2a (strain ATCC 700532 / DSM 15464 / FAM18).